We begin with the raw amino-acid sequence, 326 residues long: MAVASLSICFSARPHLLLRNFSPRPKFVAMAAMSEDPIREWILTEGKATQITKIGSVGGGCINLASHYQTDAGSFFVKTNRSIGPAMFEGEALGLEAMYETRTIRVPNPHKAGELPTGGSYIIMEFIDFGGSRGNQAELGRKLAEMHKAGKTSKGFGFEVDNTIGSTPQINTWSSDWIEFYGEKRLGYQLKLARDQYGDSAIYQKGHTLIQNMAPLFENVVIEPCLLHGDLWSGNIAYDKNNEPVILDPACYYGHNEADFGMSWCAGFGESFYNAYFKVMPKQAGYEKRRDLYLLYHYLNHYNLFGSGYRSSAMSIIDDYLRMLKA.

A chloroplast-targeting transit peptide spans 1-30; the sequence is MAVASLSICFSARPHLLLRNFSPRPKFVAM. 125–127 serves as a coordination point for ATP; it reads EFI. Asp230 serves as the catalytic Proton acceptor.

It belongs to the fructosamine kinase family.

The protein resides in the plastid. The protein localises to the chloroplast. The catalysed reaction is N(6)-D-ribulosyl-L-lysyl-[protein] + ATP = N(6)-(3-O-phospho-D-ribulosyl)-L-lysyl-[protein] + ADP + H(+). The enzyme catalyses N(6)-(D-erythrulosyl)-L-lysyl-[protein] + ATP = N(6)-(3-O-phospho-D-erythrulosyl)-L-lysyl-[protein] + ADP + H(+). Its function is as follows. Initiates a process leading to the deglycation of proteins. Phosphorylates low-molecular-mass and protein-bound erythrulosamines and ribulosamines, but not fructosamines or psicosamines, on the third carbon of the sugar moiety. Protein-bound erythrulosamine 3-phosphates and ribulosamine 3-phosphates are unstable and decompose under physiological conditions. This chain is Protein-ribulosamine 3-kinase, chloroplastic, found in Arabidopsis thaliana (Mouse-ear cress).